Here is a 1053-residue protein sequence, read N- to C-terminus: CRISPR-associated endonuclease Cas9 (1053 aa).

A ruvC-I region spans residues 1-41 (MKRNYILGLDIGITSVGYGIIDYETRDVIDAGVRLFKEANV). Asp-10 (for RuvC-like nuclease domain) is an active-site residue. Asp-10 serves as a coordination point for Mg(2+). The segment at 41–426 (VENNEGRRSK…IFNRLKLVPK (386 aa)) is recognition lobe. A ruvC-II region spans residues 435–481 (EIPTTLVDDFILSPVVKRSFIQSIKVINAIIKKYGLPNDIIIELARE). Residues Glu-477 and Glu-481 each contribute to the Mg(2+) site. The HNH Cas9-type domain maps to 480–646 (REKNSKDAQK…VQKDFINRNL (167 aa)). His-557 acts as the Proton acceptor for HNH nuclease domain in catalysis. Residues 650-775 (RYATRGLMNL…FKDYKYSHRV (126 aa)) are ruvC-III. His-701 provides a ligand contact to Mg(2+). Tyr-789 is an RNA binding site. PAM substrate-binding regions lie at residues 882–889 (YYGNKLNA) and 985–993 (NNDLLNRIE). The interval 910–1053 (KPYRFDVYLD…KKHPQIIKKG (144 aa)) is PAM-interacting domain (PI).

This sequence belongs to the CRISPR-associated Cas9 family. Subtype II-A subfamily. Monomer. Binds crRNA and tracrRNA. The cofactor is Mg(2+).

Its function is as follows. CRISPR (clustered regularly interspaced short palindromic repeat) is an adaptive immune system that provides protection against mobile genetic elements (viruses, transposable elements and conjugative plasmids). CRISPR clusters contain spacers, sequences complementary to antecedent mobile elements, and target invading nucleic acids. CRISPR clusters are transcribed and processed into CRISPR RNA (crRNA). In type II CRISPR systems correct processing of pre-crRNA requires a trans-encoded small RNA (tracrRNA), endogenous ribonuclease 3 (rnc) and this protein. The tracrRNA serves as a guide for ribonuclease 3-aided processing of pre-crRNA. Subsequently Cas9/crRNA/tracrRNA endonucleolytically cleaves linear or circular dsDNA target complementary to the spacer; Cas9 is inactive in the absence of the 2 guide RNAs (gRNA). Cas9 recognizes the protospacer adjacent motif (PAM) in the CRISPR repeat sequences to help distinguish self versus nonself, as targets within the bacterial CRISPR locus do not have PAMs. PAM recognition is also required for catalytic activity. In Staphylococcus aureus, this protein is CRISPR-associated endonuclease Cas9.